A 146-amino-acid chain; its full sequence is Bacterial hemoglobin (146 aa).

In terms of domain architecture, Globin spans 1-138 (MLDQQTINII…IADVFIQVEA (138 aa)). Q53 and H85 together coordinate heme b.

It belongs to the globin family. As to quaternary structure, homodimer.

This protein functions as a terminal oxidase. This is Bacterial hemoglobin (vhb) from Vitreoscilla stercoraria.